The following is a 337-amino-acid chain: Ribosomal RNA small subunit methyltransferase C (337 aa).

This sequence belongs to the methyltransferase superfamily. RsmC family. As to quaternary structure, monomer.

Its subcellular location is the cytoplasm. The catalysed reaction is guanosine(1207) in 16S rRNA + S-adenosyl-L-methionine = N(2)-methylguanosine(1207) in 16S rRNA + S-adenosyl-L-homocysteine + H(+). Its function is as follows. Specifically methylates the guanine in position 1207 of 16S rRNA in the 30S particle. The chain is Ribosomal RNA small subunit methyltransferase C from Proteus mirabilis (strain HI4320).